The following is a 491-amino-acid chain: Glutamyl-tRNA(Gln) amidotransferase subunit A (491 aa).

Residues Lys-79 and Ser-154 each act as charge relay system in the active site. The active-site Acyl-ester intermediate is the Ser-178.

This sequence belongs to the amidase family. GatA subfamily. Heterotrimer of A, B and C subunits.

The enzyme catalyses L-glutamyl-tRNA(Gln) + L-glutamine + ATP + H2O = L-glutaminyl-tRNA(Gln) + L-glutamate + ADP + phosphate + H(+). Its function is as follows. Allows the formation of correctly charged Gln-tRNA(Gln) through the transamidation of misacylated Glu-tRNA(Gln) in organisms which lack glutaminyl-tRNA synthetase. The reaction takes place in the presence of glutamine and ATP through an activated gamma-phospho-Glu-tRNA(Gln). The protein is Glutamyl-tRNA(Gln) amidotransferase subunit A of Synechococcus sp. (strain CC9605).